We begin with the raw amino-acid sequence, 345 residues long: Mycothiol acetyltransferase (345 aa).

N-acetyltransferase domains lie at 6 to 149 (DTYE…KAME) and 164 to 345 (FEVL…RGRL). Glu-39 contributes to the 1D-myo-inositol 2-(L-cysteinylamino)-2-deoxy-alpha-D-glucopyranoside binding site. 76–78 (LAV) contacts acetyl-CoA. Residues Glu-198, Lys-261, and Glu-277 each coordinate 1D-myo-inositol 2-(L-cysteinylamino)-2-deoxy-alpha-D-glucopyranoside. Acetyl-CoA is bound by residues 281–283 (VCL) and 288–294 (RGRGLGQ). Tyr-315 is a binding site for 1D-myo-inositol 2-(L-cysteinylamino)-2-deoxy-alpha-D-glucopyranoside.

The protein belongs to the acetyltransferase family. MshD subfamily. Monomer.

It carries out the reaction 1D-myo-inositol 2-(L-cysteinylamino)-2-deoxy-alpha-D-glucopyranoside + acetyl-CoA = mycothiol + CoA + H(+). Catalyzes the transfer of acetyl from acetyl-CoA to desacetylmycothiol (Cys-GlcN-Ins) to form mycothiol. The chain is Mycothiol acetyltransferase from Corynebacterium jeikeium (strain K411).